The chain runs to 68 residues: Probable tautomerase Cj0270 (68 aa).

P2 acts as the Proton acceptor; via imino nitrogen in catalysis.

This sequence belongs to the 4-oxalocrotonate tautomerase family.

The chain is Probable tautomerase Cj0270 from Campylobacter jejuni subsp. jejuni serotype O:2 (strain ATCC 700819 / NCTC 11168).